The chain runs to 1357 residues: DNA-directed RNA polymerase subunit beta (1357 aa).

This sequence belongs to the RNA polymerase beta chain family. As to quaternary structure, the RNAP catalytic core consists of 2 alpha, 1 beta, 1 beta' and 1 omega subunit. When a sigma factor is associated with the core the holoenzyme is formed, which can initiate transcription.

It carries out the reaction RNA(n) + a ribonucleoside 5'-triphosphate = RNA(n+1) + diphosphate. Its function is as follows. DNA-dependent RNA polymerase catalyzes the transcription of DNA into RNA using the four ribonucleoside triphosphates as substrates. This Pseudomonas aeruginosa (strain LESB58) protein is DNA-directed RNA polymerase subunit beta.